Reading from the N-terminus, the 446-residue chain is tRNA-2-methylthio-N(6)-dimethylallyladenosine synthase (446 aa).

The region spanning 5–121 is the MTTase N-terminal domain; the sequence is KYLYVETFGC…LPEIVRAAER (117 aa). The [4Fe-4S] cluster site is built by Cys14, Cys50, Cys84, Cys159, Cys163, and Cys166. The 231-residue stretch at 145 to 375 folds into the Radical SAM core domain; the sequence is GEGGVTRFVT…QTLQQQMKRE (231 aa). The 63-residue stretch at 378-440 folds into the TRAM domain; sequence ISFVGTRQLV…QNSLLGEIVT (63 aa).

The protein belongs to the methylthiotransferase family. MiaB subfamily. As to quaternary structure, monomer. [4Fe-4S] cluster serves as cofactor.

It is found in the cytoplasm. The catalysed reaction is N(6)-dimethylallyladenosine(37) in tRNA + (sulfur carrier)-SH + AH2 + 2 S-adenosyl-L-methionine = 2-methylsulfanyl-N(6)-dimethylallyladenosine(37) in tRNA + (sulfur carrier)-H + 5'-deoxyadenosine + L-methionine + A + S-adenosyl-L-homocysteine + 2 H(+). Catalyzes the methylthiolation of N6-(dimethylallyl)adenosine (i(6)A), leading to the formation of 2-methylthio-N6-(dimethylallyl)adenosine (ms(2)i(6)A) at position 37 in tRNAs that read codons beginning with uridine. The chain is tRNA-2-methylthio-N(6)-dimethylallyladenosine synthase from Geobacter sulfurreducens (strain ATCC 51573 / DSM 12127 / PCA).